We begin with the raw amino-acid sequence, 189 residues long: Peptidyl-tRNA hydrolase (189 aa).

Tyr-15 contributes to the tRNA binding site. Catalysis depends on His-20, which acts as the Proton acceptor. The tRNA site is built by Phe-66, Asn-68, and Asn-114.

The protein belongs to the PTH family. Monomer.

The protein resides in the cytoplasm. The catalysed reaction is an N-acyl-L-alpha-aminoacyl-tRNA + H2O = an N-acyl-L-amino acid + a tRNA + H(+). Its function is as follows. Hydrolyzes ribosome-free peptidyl-tRNAs (with 1 or more amino acids incorporated), which drop off the ribosome during protein synthesis, or as a result of ribosome stalling. In terms of biological role, catalyzes the release of premature peptidyl moieties from peptidyl-tRNA molecules trapped in stalled 50S ribosomal subunits, and thus maintains levels of free tRNAs and 50S ribosomes. The sequence is that of Peptidyl-tRNA hydrolase from Streptococcus gordonii (strain Challis / ATCC 35105 / BCRC 15272 / CH1 / DL1 / V288).